The following is a 247-amino-acid chain: Segregation and condensation protein A (247 aa).

This sequence belongs to the ScpA family. As to quaternary structure, component of a cohesin-like complex composed of ScpA, ScpB and the Smc homodimer, in which ScpA and ScpB bind to the head domain of Smc. The presence of the three proteins is required for the association of the complex with DNA.

The protein localises to the cytoplasm. In terms of biological role, participates in chromosomal partition during cell division. May act via the formation of a condensin-like complex containing Smc and ScpB that pull DNA away from mid-cell into both cell halves. This chain is Segregation and condensation protein A, found in Bacillus anthracis (strain A0248).